The following is a 583-amino-acid chain: Lipoprotein LpqB (583 aa).

An N-terminal signal peptide occupies residues 1–29; that stretch reads MSNKTTEATKTTKVKKVLSVVAGLGLLAG. Cysteine 30 carries the N-palmitoyl cysteine lipid modification. Cysteine 30 carries the S-diacylglycerol cysteine lipid modification. The tract at residues 38-63 is disordered; sequence NPEAISSYAPAPSGQEAPTPTDGQPS.

This sequence belongs to the LpqB lipoprotein family.

It localises to the cell membrane. This is Lipoprotein LpqB from Corynebacterium jeikeium (strain K411).